The sequence spans 327 residues: Cyclic AMP-responsive element-binding protein 1 (327 aa).

Disordered regions lie at residues 1–27 (MTMESGADNQQSGDAAVTEAENQQMTV) and 94–113 (SEDSQESVDSVTDSQKRREI). Residues 87–146 (QISTIAESEDSQESVDSVTDSQKRREILSRRPSYRKILNDLSSDAPGVPRIEEEKSEEET) form the KID domain. A Phosphoserine; by CaMK1, CaMK2, CaMK4, PKB/AKT1 or PKB/AKT2, RPS6KA3, RPS6KA4, RPS6KA5 and SGK1 modification is found at S119. K122 is covalently cross-linked (Glycyl lysine isopeptide (Lys-Gly) (interchain with G-Cter in SUMO2)). Residues 126 to 151 (DLSSDAPGVPRIEEEKSEEETSAPAI) form a disordered region. Residue S128 is modified to Phosphoserine; by CaMK2. A Phosphoserine; by HIPK2 modification is found at S257. Positions 269 to 327 (ARKREVRLMKNREAARECRRKKKEYVKCLENRVAVLENQNKTLIEELKALKDLYCHKSD) constitute a bZIP domain. The interval 270–295 (RKREVRLMKNREAARECRRKKKEYVK) is basic motif. Residues K271 and K290 each participate in a glycyl lysine isopeptide (Lys-Gly) (interchain with G-Cter in SUMO1) cross-link. Residues 297–318 (LENRVAVLENQNKTLIEELKAL) form a leucine-zipper region.

This sequence belongs to the bZIP family. Interacts with PPRC1. Binds DNA as a dimer. This dimer is stabilized by magnesium ions. Interacts, through the bZIP domain, with the coactivators CRTC1/TORC1, CRTC2/TORC2 and CRTC3/TORC3. Interacts (phosphorylated form) with TOX3. When phosphorylated on Ser-119, binds CREBBP. Interacts with ARRB1. Binds to HIPK2. Interacts with SGK1. Interacts with CREBL2; regulates CREB1 phosphorylation, stability and transcriptional activity. Interacts with TSSK4; this interaction facilitates phosphorylation on Ser-119. Forms a complex with KMT2A and CREBBP. Interacts with TOX4; CREB1 is required for full induction of TOX4-dependent activity and the interaction is increased by cAMP and inhibited by insulin. In terms of processing, phosphorylation of Ser-119 allows CREBBP binding. Stimulated by phosphorylation. Phosphorylated Ser-128 can be detected in the suprachiasmatic nucleus (SCN), the amygdala, the cortex, and the hippocampus but not in the striatum nor in the cerebellum. In the SCN, phosphorylation of Ser-128 and Ser-119 are stimulated by light exposure and submitted to circadian oscillations. In the retina, only phosphorylation of Ser-119 can be detected upon light exposure. Phosphorylation of both Ser-119 and Ser-128 in the SCN regulates the activity of CREB and participates in circadian rhythm generation. Phosphorylated upon calcium influx by CaMK4 and CaMK2 on Ser-119. CaMK4 is much more potent than CAMK2 in activating CREB. Phosphorylated by CaMK2 on Ser-128. Phosphorylation of Ser-128 blocks CREB-mediated transcription even when Ser-119 is phosphorylated. Phosphorylated by CaMK1. Phosphorylation of Ser-271 by HIPK2 in response to genotoxic stress promotes CREB1 activity, facilitating the recruitment of the coactivator CBP. Phosphorylated at Ser-119 by RPS6KA3, RPS6KA4 and RPS6KA5 in response to mitogenic or stress stimuli. CREBL2 positively regulates phosphorylation at Ser-119 thereby stimulating CREB1 transcriptional activity. In liver, phosphorylation is induced by fasting or glucagon in a circadian fashion. Phosphorylated by TSSK4 on Ser-119. Post-translationally, sumoylated with SUMO1. Sumoylation on Lys-290, but not on Lys-271, is required for nuclear localization of this protein. Sumoylation is enhanced under hypoxia, promoting nuclear localization and stabilization. Expressed in the heart (at protein level).

The protein localises to the nucleus. Functionally, phosphorylation-dependent transcription factor that stimulates transcription upon binding to the DNA cAMP response element (CRE), a sequence present in many viral and cellular promoters. Transcription activation is enhanced by the TORC coactivators which act independently of Ser-119 phosphorylation. Involved in different cellular processes including the synchronization of circadian rhythmicity and the differentiation of adipose cells. Regulates the expression of apoptotic and inflammatory response factors in cardiomyocytes in response to ERFE-mediated activation of AKT signaling. This chain is Cyclic AMP-responsive element-binding protein 1 (Creb1), found in Mus musculus (Mouse).